The chain runs to 153 residues: Putative WASP homolog-associated protein with actin, membranes and microtubules-like protein 1 (153 aa).

Residues 113-151 (AIQFYEIQLELYEVKFEILKNKEILLTTQLDSLERLIKD) are a coiled coil.

This is Putative WASP homolog-associated protein with actin, membranes and microtubules-like protein 1 (WHAMMP3) from Homo sapiens (Human).